Reading from the N-terminus, the 221-residue chain is Endonuclease V (221 aa).

Mg(2+) contacts are provided by aspartate 44 and aspartate 112.

This sequence belongs to the endonuclease V family. Mg(2+) serves as cofactor.

It localises to the cytoplasm. The catalysed reaction is Endonucleolytic cleavage at apurinic or apyrimidinic sites to products with a 5'-phosphate.. Its function is as follows. DNA repair enzyme involved in the repair of deaminated bases. Selectively cleaves double-stranded DNA at the second phosphodiester bond 3' to a deoxyinosine leaving behind the intact lesion on the nicked DNA. The sequence is that of Endonuclease V from Nostoc sp. (strain PCC 7120 / SAG 25.82 / UTEX 2576).